We begin with the raw amino-acid sequence, 358 residues long: Putative UDP-kanosamine synthase oxidoreductase subunit (358 aa).

As to quaternary structure, interacts with RifK.

The enzyme catalyses UDP-alpha-D-glucose + NAD(+) = UDP-3-oxo-alpha-D-glucose + NADH + H(+). The protein operates within antibiotic biosynthesis; rifamycin B biosynthesis. In a complex with RifK, RifL may catalyze the oxidation of UDP-glucose to UDP-3-keto-D-glucose, which would then be used by RifK to produce UDP-kanosamine. Is not able to use dTDP-glucose as substrate. This Amycolatopsis mediterranei (strain S699) (Nocardia mediterranei) protein is Putative UDP-kanosamine synthase oxidoreductase subunit (rifL).